Reading from the N-terminus, the 278-residue chain is Serine/threonine-protein phosphatase PGAM5, mitochondrial (278 aa).

Residues 7 to 27 form a helical membrane-spanning segment; the sequence is LIAGGSAAAAAAAILGAAAVG.

The protein belongs to the phosphoglycerate mutase family. BPG-dependent PGAM subfamily. In terms of processing, phosphorylated by the RIPK1/RIPK3 complex under necrotic conditions. This phosphorylation increases PGAM5 phosphatase activity.

It localises to the mitochondrion outer membrane. It carries out the reaction O-phospho-L-seryl-[protein] + H2O = L-seryl-[protein] + phosphate. The enzyme catalyses O-phospho-L-threonyl-[protein] + H2O = L-threonyl-[protein] + phosphate. Its function is as follows. Displays phosphatase activity for serine/threonine residues. Has apparently no phosphoglycerate mutase activity. May be regulator of mitochondrial dynamics. May be a central mediator for programmed necrosis. This Xenopus tropicalis (Western clawed frog) protein is Serine/threonine-protein phosphatase PGAM5, mitochondrial (pgam5).